A 167-amino-acid chain; its full sequence is HTH-type transcriptional repressor IacR (167 aa).

A compositionally biased stretch (polar residues) spans 1 to 10 (MSNAKNTSAA). The tract at residues 1-25 (MSNAKNTSAASPARKGHSHHDPASD) is disordered. The region spanning 30–162 (EDFPFYWLAR…LNRMLEVVFH (133 aa)) is the HTH marR-type domain. The H-T-H motif DNA-binding region spans 76–99 (ISEISTHAIAKLSTITKIVYRMKE).

Exposure to indole-3-acetic acid (IAA) probably relieves the repressor activity. Probably acts as a repressor of iacA expression. This is HTH-type transcriptional repressor IacR from Pseudomonas putida (Arthrobacter siderocapsulatus).